The primary structure comprises 554 residues: uncharacterized protein (554 aa).

An N-terminal signal peptide occupies residues 1–33 (MKKILIIILFIIIFIVLIYSGLWFVIMFSLSHS).

This is an uncharacterized protein from Rickettsia prowazekii (strain Madrid E).